The sequence spans 974 residues: Coiled-coil domain-containing protein 146 (974 aa).

The tract at residues 1-44 (MEDRSKYIAEESEDEEDEEQEEKEKKGGASTSTETEEDQEDIPS) is disordered. Residues 10 to 21 (EESEDEEDEEQE) are compositionally biased toward acidic residues. Ser12 bears the Phosphoserine mark. 6 coiled-coil regions span residues 105–160 (VQLL…QERE), 195–340 (KLLK…TKEN), 421–474 (LPEQ…REVL), 512–660 (KKLE…NESG), 687–712 (QDIE…QRQI), and 767–848 (LTEE…ELSM).

As to quaternary structure, interacts with CCDC38 and CCDC42. Interacts with intraflagellar transport proteins IFT20 and IFT88.

It is found in the cytoplasm. It localises to the cytoskeleton. The protein localises to the microtubule organizing center. Its subcellular location is the centrosome. The protein resides in the centriole. It is found in the cell projection. It localises to the cilium. The protein localises to the flagellum. Its subcellular location is the flagellum axoneme. The protein resides in the cilium basal body. It is found in the midbody. Essential for sperm flagellum biogenesis and male fertility. This chain is Coiled-coil domain-containing protein 146 (Ccdc146), found in Rattus norvegicus (Rat).